The chain runs to 271 residues: Putative pyruvate, phosphate dikinase regulatory protein (271 aa).

ADP is bound at residue 150 to 157; sequence GVSRTSKT.

Belongs to the pyruvate, phosphate/water dikinase regulatory protein family. PDRP subfamily.

The enzyme catalyses N(tele)-phospho-L-histidyl/L-threonyl-[pyruvate, phosphate dikinase] + ADP = N(tele)-phospho-L-histidyl/O-phospho-L-threonyl-[pyruvate, phosphate dikinase] + AMP + H(+). It carries out the reaction N(tele)-phospho-L-histidyl/O-phospho-L-threonyl-[pyruvate, phosphate dikinase] + phosphate + H(+) = N(tele)-phospho-L-histidyl/L-threonyl-[pyruvate, phosphate dikinase] + diphosphate. In terms of biological role, bifunctional serine/threonine kinase and phosphorylase involved in the regulation of the pyruvate, phosphate dikinase (PPDK) by catalyzing its phosphorylation/dephosphorylation. The sequence is that of Putative pyruvate, phosphate dikinase regulatory protein from Oceanobacillus iheyensis (strain DSM 14371 / CIP 107618 / JCM 11309 / KCTC 3954 / HTE831).